The following is a 627-amino-acid chain: 1-deoxy-D-xylulose-5-phosphate synthase (627 aa).

Residues H80 and 121-123 (GHS) contribute to the thiamine diphosphate site. D152 contacts Mg(2+). Residues 153-154 (GA), N181, Y288, and E370 contribute to the thiamine diphosphate site. N181 contributes to the Mg(2+) binding site.

It belongs to the transketolase family. DXPS subfamily. Homodimer. Mg(2+) is required as a cofactor. The cofactor is thiamine diphosphate.

It carries out the reaction D-glyceraldehyde 3-phosphate + pyruvate + H(+) = 1-deoxy-D-xylulose 5-phosphate + CO2. It functions in the pathway metabolic intermediate biosynthesis; 1-deoxy-D-xylulose 5-phosphate biosynthesis; 1-deoxy-D-xylulose 5-phosphate from D-glyceraldehyde 3-phosphate and pyruvate: step 1/1. Its function is as follows. Catalyzes the acyloin condensation reaction between C atoms 2 and 3 of pyruvate and glyceraldehyde 3-phosphate to yield 1-deoxy-D-xylulose-5-phosphate (DXP). The protein is 1-deoxy-D-xylulose-5-phosphate synthase of Aliivibrio fischeri (strain ATCC 700601 / ES114) (Vibrio fischeri).